A 399-amino-acid polypeptide reads, in one-letter code: N-acetylglucosamine-6-phosphate deacetylase (399 aa).

A divalent metal cation-binding residues include His-65, His-67, and Glu-135. 146–147 (AH) serves as a coordination point for substrate. His-201 and His-222 together coordinate a divalent metal cation. Substrate is bound by residues 225-226 (NG), Arg-233, and 254-257 (DGHH). Asp-279 lines the a divalent metal cation pocket. Asp-279 (proton donor/acceptor) is an active-site residue. 312–314 (LAG) contacts substrate.

The protein belongs to the metallo-dependent hydrolases superfamily. NagA family. Homodimer. It depends on a divalent metal cation as a cofactor.

It carries out the reaction N-acetyl-D-glucosamine 6-phosphate + H2O = D-glucosamine 6-phosphate + acetate. It functions in the pathway amino-sugar metabolism; N-acetylneuraminate degradation; D-fructose 6-phosphate from N-acetylneuraminate: step 4/5. In terms of biological role, involved in the first committed step in the biosynthesis of amino-sugar-nucleotides. Catalyzes the hydrolysis of the N-acetyl group of N-acetylglucosamine-6-phosphate (GlcNAc-6-P) to yield glucosamine 6-phosphate and acetate. This Vibrio furnissii protein is N-acetylglucosamine-6-phosphate deacetylase (manD).